Here is a 473-residue protein sequence, read N- to C-terminus: Response regulator protein FleR (473 aa).

In terms of domain architecture, Response regulatory spans 4–118; the sequence is KVLLVEDDRA…ALLDLVARHA (115 aa). 4-aspartylphosphate is present on Asp-53. The Sigma-54 factor interaction domain maps to 130–359; that stretch reads PVALEPASRQ…LDNAIQRALI (230 aa). ATP is bound by residues 158 to 165 and 221 to 230; these read GESGTGKE and ADGGTILLDE.

Functionally, member of the two-component regulatory system FleS/FleR that regulates the expression of multiple genes involved in flagellar synthesis, adhesion, swarming, motility and antibiotic resistance. May function as a transcriptional activator by direct binding to a cis-acting sequence upstream of the target genes. The polypeptide is Response regulator protein FleR (Pseudomonas aeruginosa (strain ATCC 15692 / DSM 22644 / CIP 104116 / JCM 14847 / LMG 12228 / 1C / PRS 101 / PAO1)).